The primary structure comprises 500 residues: Cytochrome P450 2D16 (500 aa).

Position 249 is a phosphoserine (Ser-249). Cys-446 provides a ligand contact to heme.

It belongs to the cytochrome P450 family. It depends on heme as a cofactor. As to expression, expressed at high levels in the inner zone of the adrenal cortex.

It localises to the endoplasmic reticulum membrane. The protein resides in the microsome membrane. The enzyme catalyses an organic molecule + reduced [NADPH--hemoprotein reductase] + O2 = an alcohol + oxidized [NADPH--hemoprotein reductase] + H2O + H(+). Functionally, cytochromes P450 are a group of heme-thiolate monooxygenases. In liver microsomes, this enzyme is involved in an NADPH-dependent electron transport pathway. It oxidizes a variety of structurally unrelated compounds, including steroids, fatty acids, and xenobiotics. In Cavia porcellus (Guinea pig), this protein is Cytochrome P450 2D16 (CYP2D16).